We begin with the raw amino-acid sequence, 128 residues long: uncharacterized protein (128 aa).

The disordered stretch occupies residues 1–50; that stretch reads MSNEQGKGMGFFGNKGKPASEKKDEKKTKLDLDYKPDLNPSTPYDPTLPV. The span at 18–36 shows a compositional bias: basic and acidic residues; it reads PASEKKDEKKTKLDLDYKP.

This is an uncharacterized protein from Bacillus anthracis.